The primary structure comprises 60 residues: Large ribosomal subunit protein uL30 (60 aa).

It belongs to the universal ribosomal protein uL30 family. As to quaternary structure, part of the 50S ribosomal subunit.

This Ralstonia pickettii (strain 12J) protein is Large ribosomal subunit protein uL30.